A 364-amino-acid chain; its full sequence is Probable zinc transporter 10 (364 aa).

Positions 1 to 28 (MTKSHVIFSASIALFLLLSISHFPGALS) are cleaved as a signal peptide. Over 29–52 (QSNKDCQSKSNYSCIDKNKALDLK) the chain is Extracellular. The chain crosses the membrane as a helical span at residues 53 to 73 (LLSIFSILITSLIGVCLPFFA). Residues 74–85 (RSIPAFQPEKSH) lie on the Cytoplasmic side of the membrane. Residues 86 to 106 (FLIVKSFASGIILSTGFMHVL) form a helical membrane-spanning segment. Residues 107–125 (PDSFEMLSSPCLNDNPWHK) are Extracellular-facing. A helical transmembrane segment spans residues 126-146 (FPFAGFVAMMSAVFTLMVDSI). Over 147–209 (TTSVFTKSGR…GSYLQLLRYR (63 aa)) the chain is Cytoplasmic. A helical membrane pass occupies residues 210–230 (ILAIVLELGIVVQSIVIGLSV). Residues 231 to 241 (GDTNNTCTIKG) are Extracellular-facing. Residues 242–262 (LVAALCFHQMFEGMGLGGCIL) form a helical membrane-spanning segment. Topologically, residues 263–271 (QAEYGWVKK) are cytoplasmic. Residues 272–292 (AVMAFFFAVTTPFGVVLGMAL) traverse the membrane as a helical segment. Residues 293 to 303 (SKTYKENSPES) lie on the Extracellular side of the membrane. The chain crosses the membrane as a helical span at residues 304 to 324 (LITVGLLNASSAGLLIYMALV). Residues 325–343 (DLLAADFMGQKMQRSIKLQ) lie on the Cytoplasmic side of the membrane. The helical transmembrane segment at 344 to 364 (LKSYAAVLLGAGGMSVMAKWA) threads the bilayer.

It belongs to the ZIP transporter (TC 2.A.5) family.

The protein resides in the cell membrane. Functionally, probably mediates zinc uptake from the rhizosphere. In Arabidopsis thaliana (Mouse-ear cress), this protein is Probable zinc transporter 10 (ZIP10).